The following is a 374-amino-acid chain: MSKFYKSGRVTTAVIVALSLSACARFDARTQANGDFDYVQTPRGEHYQTAHFTQNEARDIYDIPALTEQQKRIGFLSSNVDIRPPTQLIPVIDGVVLEANNSDKTTVLFNAFNHTENMKDKVWTLLESYIAANNIEVAAKDSNLTQIETGMFRHQQAYGSFLFRTKVVRESSYRFTLNQPQGGQNAALTVEVLSYSEKNDNVDLKVNLTARSKKSIELRLVNDLLKYAYQLKESSELQVANSQPLPIKLGYDDNNQMVWIVDADFIVSWTKLPDLLALLRFEQVDADKNLGYYLVKFKAPNAKYWPENNLNSFELDNAEYFIQLGELNSGSTSITWLDADKKPLADEKVTEIYFSITSKIRDVLLLNENQSKAL.

The signal sequence occupies residues 1 to 22; sequence MSKFYKSGRVTTAVIVALSLSA. A lipid anchor (N-palmitoyl cysteine) is attached at Cys-23. Cys-23 carries the S-diacylglycerol cysteine lipid modification.

It belongs to the BamC family. In terms of assembly, part of the Bam complex.

It is found in the cell outer membrane. In terms of biological role, part of the outer membrane protein assembly complex, which is involved in assembly and insertion of beta-barrel proteins into the outer membrane. This is Outer membrane protein assembly factor BamC from Psychromonas ingrahamii (strain DSM 17664 / CCUG 51855 / 37).